Consider the following 611-residue polypeptide: Conglutin beta 1 (611 aa).

Residues 1–30 (MAKMRVRLPMLILLLGVVFLLAASIGIAYG) form the signal peptide. Basic and acidic residues-rich tracts occupy residues 32-82 (KDFT…RSQS) and 130-141 (SRREEREEREQE). 2 disordered regions span residues 32 to 194 (KDFT…NRFQ) and 384 to 407 (LRKH…NLRS). Residues 142-151 (QGSSSGSQRG) are compositionally biased toward low complexity. The segment covering 152–181 (SGDERRQHRERRVHREEREQEQDSRSDSRR) has biased composition (basic and acidic residues). Positions 186 to 344 (YHFSSNRFQT…TFNTRYEEIE (159 aa)) constitute a Cupin type-1 1 domain. A compositionally biased stretch (low complexity) spans 390 to 402 (SSSGEGKPSESGP). In terms of domain architecture, Cupin type-1 2 spans 403-569 (FNLRSNKPIY…TFPGSIEDVE (167 aa)). The N-linked (GlcNAc...) asparagine glycan is linked to N434. Residues 476–495 (DQQRQQDEQEEEYEQGEEEV) form a disordered region. Positions 483–492 (EQEEEYEQGE) are enriched in acidic residues. A glycan (N-linked (GlcNAc...) asparagine) is linked at N519. Positions 580–589 (FANAQPQQQQ) are enriched in low complexity. A disordered region spans residues 580–600 (FANAQPQQQQQREKEGRRGRR).

This sequence belongs to the 7S seed storage protein family. In terms of assembly, component of globulins complexes which accumulate in seeds.

Its function is as follows. Seed storage protein. Accumulates during seed development and is hydrolyzed after germination to provide a carbon and nitrogen source for the developing seedling. This chain is Conglutin beta 1, found in Lupinus angustifolius (Narrow-leaved blue lupine).